Here is a 415-residue protein sequence, read N- to C-terminus: DNA double-strand break repair protein Mre11 (415 aa).

4 residues coordinate Mn(2+): Asp-10, His-12, Asp-51, and Asn-86. His-87 functions as the Proton donor in the catalytic mechanism. Mn(2+) is bound by residues His-174, His-208, and His-210.

The protein belongs to the MRE11/RAD32 family. As to quaternary structure, homodimer. Forms a heterotetramer composed of two Mre11 subunits and two Rad50 subunits. Mn(2+) serves as cofactor.

Nuclease activity is regulated by Rad50. In terms of biological role, part of the Rad50/Mre11 complex, which is involved in the early steps of DNA double-strand break (DSB) repair. The complex may facilitate opening of the processed DNA ends to aid in the recruitment of HerA and NurA. Mre11 binds to DSB ends and has both double-stranded 3'-5' exonuclease activity and single-stranded endonuclease activity. In Pyrococcus abyssi (strain GE5 / Orsay), this protein is DNA double-strand break repair protein Mre11.